We begin with the raw amino-acid sequence, 130 residues long: Glycine cleavage system H protein (130 aa).

The region spanning 23 to 105 is the Lipoyl-binding domain; that stretch reads IGIIGITDFA…YGKGWMIKVE (83 aa). An N6-lipoyllysine modification is found at lysine 64.

The protein belongs to the GcvH family. The glycine cleavage system is composed of four proteins: P, T, L and H. Requires (R)-lipoate as cofactor.

The glycine cleavage system catalyzes the degradation of glycine. The H protein shuttles the methylamine group of glycine from the P protein to the T protein. The sequence is that of Glycine cleavage system H protein from Carboxydothermus hydrogenoformans (strain ATCC BAA-161 / DSM 6008 / Z-2901).